Reading from the N-terminus, the 227-residue chain is Venom allergen 5 (227 aa).

The signal sequence occupies residues 1–21 (MKISCLICLVIVLTIIHLSQA). Cystine bridges form between Cys25–Cys37, Cys29–Cys125, Cys49–Cys117, and Cys193–Cys210. Residues 69–212 (EEHNRFRQKV…MQIHYLICNY (144 aa)) enclose the SCP domain.

The protein belongs to the CRISP family. Venom allergen 5-like subfamily. Expressed by the venom gland.

The protein resides in the secreted. This Polistes dominula (European paper wasp) protein is Venom allergen 5.